Reading from the N-terminus, the 24-residue chain is M-poneritoxin-Ng2b (24 aa).

Leu24 is modified (leucine amide).

As to expression, expressed by the venom gland.

It localises to the secreted. Its function is as follows. Has a broad spectrum of activity against both Gram-positive and Gram-negative bacteria. Is inactive against yeast, erythrocytes, and insects. The protein is M-poneritoxin-Ng2b of Neoponera goeldii (Ponerine ant).